A 370-amino-acid chain; its full sequence is Phospho-2-dehydro-3-deoxyheptonate aldolase, tyrosine-inhibited (370 aa).

This sequence belongs to the class-I DAHP synthase family.

The enzyme catalyses D-erythrose 4-phosphate + phosphoenolpyruvate + H2O = 7-phospho-2-dehydro-3-deoxy-D-arabino-heptonate + phosphate. It functions in the pathway metabolic intermediate biosynthesis; chorismate biosynthesis; chorismate from D-erythrose 4-phosphate and phosphoenolpyruvate: step 1/7. Its activity is regulated as follows. Inhibited by tyrosine. In terms of biological role, stereospecific condensation of phosphoenolpyruvate (PEP) and D-erythrose-4-phosphate (E4P) giving rise to 3-deoxy-D-arabino-heptulosonate-7-phosphate (DAHP). The chain is Phospho-2-dehydro-3-deoxyheptonate aldolase, tyrosine-inhibited (ARO4) from Candida albicans (strain SC5314 / ATCC MYA-2876) (Yeast).